The chain runs to 625 residues: Sphingomyelin phosphodiesterase (625 aa).

The disordered stretch occupies residues Met1–Ala20. The first 40 residues, Met1–Ala40, serve as a signal peptide directing secretion. Residues Trp81 to Asp165 form the Saposin B-type domain. Residue Asn82 is glycosylated (N-linked (GlcNAc...) asparagine). Cystine bridges form between Cys85-Cys161, Cys88-Cys153, and Cys116-Cys127. Asn171 is a glycosylation site (N-linked (GlcNAc...) asparagine). Positions 202 and 204 each coordinate Zn(2+). Disulfide bonds link Cys217/Cys222 and Cys223/Cys246. Residues Asp274 and Asn314 each contribute to the Zn(2+) site. N-linked (GlcNAc...) asparagine glycans are attached at residues Asn331 and Asn391. A disulfide bridge links Cys381 with Cys427. His421, His453, and His455 together coordinate Zn(2+). Asn499 carries an N-linked (GlcNAc...) asparagine glycan. Ser504 carries the post-translational modification Phosphoserine. Asn516 is a glycosylation site (N-linked (GlcNAc...) asparagine). 2 cysteine pairs are disulfide-bonded: Cys580–Cys584 and Cys590–Cys603.

Belongs to the acid sphingomyelinase family. As to quaternary structure, monomer. Interacts with SORT1; the interaction is required for SMPD1 targeting to lysosomes. Zn(2+) is required as a cofactor. Post-translationally, proteolytically processed. Mature lysosomal form arises from C-terminal proteolytic processing of pro-sphingomyelin phosphodiesterase. In terms of processing, both lysosomal and secreted forms are glycosylated but they show a differential pattern of glycosylation. Phosphorylated at Ser-504 by PRKCD upon stress stimuli. Phosphorylation is required for secretion. Post-translationally, this form is generated following cleavage by CASP7 in the extracellular milieu. It shows increased activity.

It localises to the lysosome. It is found in the lipid droplet. The protein localises to the secreted. Its subcellular location is the extracellular space. The catalysed reaction is a sphingomyelin + H2O = phosphocholine + an N-acylsphing-4-enine + H(+). The enzyme catalyses N-(octadecanoyl)-sphing-4-enine-1-phosphocholine + H2O = N-octadecanoylsphing-4-enine + phosphocholine + H(+). It catalyses the reaction a 1,2-diacyl-sn-glycero-3-phosphocholine + H2O = phosphocholine + a 1,2-diacyl-sn-glycerol + H(+). It carries out the reaction 1,2-dihexadecanoyl-sn-glycero-3-phosphocholine + H2O = 1,2-dihexadecanoyl-sn-glycerol + phosphocholine + H(+). With respect to regulation, hydrolysis of liposomal sphingomyelin is stimulated by incorporation of diacylglycerol (DAG), ceramide and free fatty acids into the liposomal membranes. Phosphatidylcholine hydrolysis is inhibited by incorporation of cholesterol, ceramide, DAG, monoacylglycerol and fatty acids. Converts sphingomyelin to ceramide. Exists as two enzymatic forms that arise from alternative trafficking of a single protein precursor, one that is targeted to the endolysosomal compartment, whereas the other is released extracellularly. However, in response to various forms of stress, lysosomal exocytosis may represent a major source of the secretory form. Functionally, in the lysosomes, converts sphingomyelin to ceramide. Plays an important role in the export of cholesterol from the intraendolysosomal membranes. Also has phospholipase C activities toward 1,2-diacylglycerolphosphocholine and 1,2-diacylglycerolphosphoglycerol. Modulates stress-induced apoptosis through the production of ceramide. In terms of biological role, when secreted, modulates cell signaling with its ability to reorganize the plasma membrane by converting sphingomyelin to ceramide. Secreted form is increased in response to stress and inflammatory mediators such as IL1B, IFNG or TNF as well as upon infection with bacteria and viruses. Produces the release of ceramide in the outer leaflet of the plasma membrane playing a central role in host defense. Ceramide reorganizes these rafts into larger signaling platforms that are required to internalize bacteria, induce apoptosis and regulate the cytokine response in infected cells. In wounded cells, the lysosomal form is released extracellularly in the presence of Ca(2+) and promotes endocytosis and plasma membrane repair. Its function is as follows. This form is generated following cleavage by CASP7 in the extracellular milieu in response to bacterial infection. It shows increased ability to convert sphingomyelin to ceramide and promotes plasma membrane repair. Plasma membrane repair by ceramide counteracts the action of gasdermin-D (GSDMD) perforin (PRF1) pores that are formed in response to bacterial infection. The polypeptide is Sphingomyelin phosphodiesterase (SMPD1) (Bos taurus (Bovine)).